The primary structure comprises 275 residues: Methylglyoxal reductase DkgA (275 aa).

Tyrosine 51 functions as the Proton donor in the catalytic mechanism. Histidine 107 contributes to the substrate binding site. An NADP(+)-binding site is contributed by 187-241 (SPLAQGGKGVFDQKVIRDLADKYGKTPAQIVIRWHLDSGLVVIPKSVTPSRIAEN).

The protein belongs to the aldo/keto reductase family. Monomer.

The protein resides in the cytoplasm. The catalysed reaction is hydroxyacetone + NADP(+) = methylglyoxal + NADPH + H(+). It carries out the reaction a primary alcohol + NADP(+) = an aldehyde + NADPH + H(+). The enzyme catalyses 2-dehydro-L-idonate + NADP(+) = 2,5-didehydro-D-gluconate + NADPH + H(+). Its function is as follows. Aldo-keto reductase that significantly contributes to cellular methylglyoxal detoxification by catalyzing the NADPH-dependent conversion of methylglyoxal to acetol. It also exhibits fairly high activity with glyoxal. Shows broad specificity and can use aromatic aldehydes such as 4-nitrobenzaldehyde, 3-nitrobenzaldehyde and benzaldehyde, and phenylglyoxal. Shows beta-keto ester reductase activity toward ethyl acetoacetate and a variety of 2-substituted derivatives. Also catalyzes the reduction of 2,5-diketo-D-gluconic acid (25DKG) to 2-keto-L-gulonic acid (2KLG) and could be involved in ketogluconate metabolism. However, the specific activity of the enzyme toward 2,5-diketo-D-gluconate was reported to be almost 400-fold lower than its activity toward methylglyoxal. Can catalyze in vitro the NADPH-dependent reduction of furfural, a natural product of lignocellulosic decomposition, to the less toxic product, furfuryl alcohol. However, it is unlikely that furfural is a physiological substrate. This is Methylglyoxal reductase DkgA from Escherichia coli (strain K12).